We begin with the raw amino-acid sequence, 439 residues long: Xaa-Pro dipeptidase (439 aa).

Aspartate 244, aspartate 255, histidine 335, glutamate 380, and glutamate 418 together coordinate Mn(2+).

It belongs to the peptidase M24B family. Bacterial-type prolidase subfamily. It depends on Mn(2+) as a cofactor.

It catalyses the reaction Xaa-L-Pro dipeptide + H2O = an L-alpha-amino acid + L-proline. Its function is as follows. Splits dipeptides with a prolyl residue in the C-terminal position. This is Xaa-Pro dipeptidase from Shewanella frigidimarina (strain NCIMB 400).